The chain runs to 153 residues: 6,7-dimethyl-8-ribityllumazine synthase (153 aa).

5-amino-6-(D-ribitylamino)uracil-binding positions include F22, 56–58 (AFE), and 80–82 (CVI). Residue 85-86 (AT) participates in (2S)-2-hydroxy-3-oxobutyl phosphate binding. Catalysis depends on H88, which acts as the Proton donor. F113 is a binding site for 5-amino-6-(D-ribitylamino)uracil. (2S)-2-hydroxy-3-oxobutyl phosphate is bound at residue R127.

This sequence belongs to the DMRL synthase family.

The catalysed reaction is (2S)-2-hydroxy-3-oxobutyl phosphate + 5-amino-6-(D-ribitylamino)uracil = 6,7-dimethyl-8-(1-D-ribityl)lumazine + phosphate + 2 H2O + H(+). It functions in the pathway cofactor biosynthesis; riboflavin biosynthesis; riboflavin from 2-hydroxy-3-oxobutyl phosphate and 5-amino-6-(D-ribitylamino)uracil: step 1/2. Catalyzes the formation of 6,7-dimethyl-8-ribityllumazine by condensation of 5-amino-6-(D-ribitylamino)uracil with 3,4-dihydroxy-2-butanone 4-phosphate. This is the penultimate step in the biosynthesis of riboflavin. The polypeptide is 6,7-dimethyl-8-ribityllumazine synthase (Endomicrobium trichonymphae).